The sequence spans 1554 residues: Lysine-specific demethylase 5C (1554 aa).

The JmjN domain occupies 14 to 55 (CPVFEPSWAEFRDPLGYIAKIRPIAEKSGICKIRPPADWQPP). Residues 79-169 (TRVKLNYLDQ…IVYPYEMYQS (91 aa)) form the ARID domain. Residues 197-207 (LRQSVQPSKFN) are compositionally biased toward polar residues. The disordered stretch occupies residues 197–227 (LRQSVQPSKFNSYGRRAKRLQPDPEPTEEDI). Residues lysine 205, lysine 229, lysine 244, and lysine 274 each participate in a glycyl lysine isopeptide (Lys-Gly) (interchain with G-Cter in SUMO2) cross-link. The segment at 284–303 (ESTSPKTFLEGKEELSHSPE) is disordered. Serine 287 is modified (phosphoserine). Lysine 295 participates in a covalent cross-link: Glycyl lysine isopeptide (Lys-Gly) (interchain with G-Cter in SUMO2). Serine 301 and serine 317 each carry phosphoserine. The segment at 326–372 (VCRMCSRGDEDDKLLLCDGCDDNYHIFCLLPPLPEIPKGVWRCPKCV) adopts a PHD-type 1 zinc-finger fold. Residues 468-634 (EYATSGWNLN…AGRQCIEHYR (167 aa)) enclose the JmjC domain. The Fe cation site is built by histidine 514, aspartate 517, and histidine 602. Phosphoserine is present on residues serine 893 and serine 897. Residue lysine 1127 forms a Glycyl lysine isopeptide (Lys-Gly) (interchain with G-Cter in SUMO2) linkage. The segment at 1187 to 1248 (ICVCGQVPAG…DTKFLCPLCM (62 aa)) adopts a PHD-type 2 zinc-finger fold. 2 disordered regions span residues 1319-1364 (SKPE…EGSG) and 1437-1535 (AERH…APFS). Residue serine 1353 is modified to Phosphoserine. Positions 1442–1457 (SRTRGRALERRRRRKV) are enriched in basic residues. The span at 1458–1475 (DRGGEPDDPAREELEPKR) shows a compositional bias: basic and acidic residues. Residues 1482 to 1497 (EAEEVQEEEELEEETG) are compositionally biased toward acidic residues.

The protein belongs to the JARID1 histone demethylase family. In terms of assembly, part of two distinct complexes, one containing E2F6, and the other containing REST. Interacts with ZMYND8. Fe(2+) serves as cofactor.

It localises to the nucleus. The catalysed reaction is N(6),N(6),N(6)-trimethyl-L-lysyl(4)-[histone H3] + 3 2-oxoglutarate + 3 O2 = L-lysyl(4)-[histone H3] + 3 formaldehyde + 3 succinate + 3 CO2. Histone demethylase that specifically demethylates 'Lys-4' of histone H3, thereby playing a central role in histone code. Does not demethylate histone H3 'Lys-9', H3 'Lys-27', H3 'Lys-36', H3 'Lys-79' or H4 'Lys-20'. Demethylates trimethylated and dimethylated but not monomethylated H3 'Lys-4'. Participates in transcriptional repression of neuronal genes by recruiting histone deacetylases and REST at neuron-restrictive silencer elements. Represses the CLOCK-BMAL1 heterodimer-mediated transcriptional activation of the core clock component PER2. This Mus musculus (Mouse) protein is Lysine-specific demethylase 5C (Kdm5c).